The primary structure comprises 831 residues: Phenylalanine--tRNA ligase beta subunit (831 aa).

The tRNA-binding domain occupies glycine 44 to alanine 155. In terms of domain architecture, B5 spans tryptophan 414 to serine 489. Mg(2+)-binding residues include aspartate 467, aspartate 473, glutamate 476, and glutamate 477. The FDX-ACB domain maps to serine 737 to arginine 830.

The protein belongs to the phenylalanyl-tRNA synthetase beta subunit family. Type 1 subfamily. As to quaternary structure, tetramer of two alpha and two beta subunits. It depends on Mg(2+) as a cofactor.

It localises to the cytoplasm. It carries out the reaction tRNA(Phe) + L-phenylalanine + ATP = L-phenylalanyl-tRNA(Phe) + AMP + diphosphate + H(+). The sequence is that of Phenylalanine--tRNA ligase beta subunit (pheT) from Mycobacterium tuberculosis (strain ATCC 25618 / H37Rv).